Consider the following 66-residue polypeptide: LTCVTKDTIFGITTQNCPAGQNLCFIRRHYINHRYTEITRGCTATCPKPTNVRETIHCCNTDKCNE.

4 disulfide bridges follow: C3-C24, C17-C42, C46-C58, and C59-C64.

This sequence belongs to the three-finger toxin family. Short-chain subfamily. Aminergic toxin sub-subfamily. As to expression, expressed by the venom gland.

It is found in the secreted. Functionally, non-competitive antagonist of alpha-2 adrenergic receptors (ADRA2) in smooth muscles, and partial antagonist of D3 dopamine receptors (DRD3) (inhibits 25% of methylspiperone binding to this receptor). Also shows a low antagonism on D2 dopamine receptors (DRD2) (short isoform). Shows high affinity to adrenergic receptors (Ki=14 nM (ADRA2A), Ki=73 nM (ADRA2B), and Ki=38 nM (ADRA2C)). Increases heart rate and blood catecholamine concentrations. The sequence is that of Rho-elapitoxin-Da1b from Dendroaspis angusticeps (Eastern green mamba).